The primary structure comprises 273 residues: MLTRRIIPCLDVTLGPNGGCVVKGVEFVNLRSAGDPVELAKRYNDQGADELVFLDITASHEGRATMIDVIERTASEVFIPMTVGGGIKTIEEIRALLRAGADKITINTTAVKDPEFIRKASDIFGSQCIVTAIDCRSNTNIDDPNARNIVRRRDGTPAWYEVVIYGGRKATGIDAIEWAKTIEELGSGEIMLTSMDADGTKDGYDLYITKAIGEAVRIPVIASGGAGTIEHMYDAFKIANADAALAASIFHFGEYTIGQAKDYLRQRGIPVRP.

Residues D11 and D134 contribute to the active site.

It belongs to the HisA/HisF family. As to quaternary structure, heterodimer of HisH and HisF.

The protein resides in the cytoplasm. It carries out the reaction 5-[(5-phospho-1-deoxy-D-ribulos-1-ylimino)methylamino]-1-(5-phospho-beta-D-ribosyl)imidazole-4-carboxamide + L-glutamine = D-erythro-1-(imidazol-4-yl)glycerol 3-phosphate + 5-amino-1-(5-phospho-beta-D-ribosyl)imidazole-4-carboxamide + L-glutamate + H(+). Its pathway is amino-acid biosynthesis; L-histidine biosynthesis; L-histidine from 5-phospho-alpha-D-ribose 1-diphosphate: step 5/9. Its function is as follows. IGPS catalyzes the conversion of PRFAR and glutamine to IGP, AICAR and glutamate. The HisF subunit catalyzes the cyclization activity that produces IGP and AICAR from PRFAR using the ammonia provided by the HisH subunit. In Methanocella arvoryzae (strain DSM 22066 / NBRC 105507 / MRE50), this protein is Imidazole glycerol phosphate synthase subunit HisF.